A 287-amino-acid polypeptide reads, in one-letter code: Fructose-bisphosphate aldolase (287 aa).

Serine 50 contacts D-glyceraldehyde 3-phosphate. The active-site Proton donor is the aspartate 85. 4 residues coordinate Zn(2+): histidine 86, aspartate 107, glutamate 137, and histidine 181. Glycine 182 contributes to the dihydroxyacetone phosphate binding site. A Zn(2+)-binding site is contributed by histidine 209. Dihydroxyacetone phosphate-binding positions include 210-212 (GGT) and 231-234 (NVNT). Threonine 212 and threonine 234 each carry phosphothreonine.

The protein belongs to the class II fructose-bisphosphate aldolase family. Zn(2+) is required as a cofactor.

It carries out the reaction beta-D-fructose 1,6-bisphosphate = D-glyceraldehyde 3-phosphate + dihydroxyacetone phosphate. Its pathway is carbohydrate degradation; glycolysis; D-glyceraldehyde 3-phosphate and glycerone phosphate from D-glucose: step 4/4. In terms of biological role, catalyzes the aldol condensation of dihydroxyacetone phosphate (DHAP or glycerone-phosphate) with glyceraldehyde 3-phosphate (G3P) to form fructose 1,6-bisphosphate (FBP) in gluconeogenesis and the reverse reaction in glycolysis. The polypeptide is Fructose-bisphosphate aldolase (fba) (Geobacillus stearothermophilus (Bacillus stearothermophilus)).